The following is a 143-amino-acid chain: Photosystem II extrinsic protein U (143 aa).

Positions 1–29 (MKRLVGVLMILGLMLTSWGLLGSPQTAIA) are cleaved as a signal peptide. Positions 30 to 44 (ASLSPLSFNPSPVLA) are excised as a propeptide.

Belongs to the PsbU family. As to quaternary structure, PSII is composed of 1 copy each of membrane proteins PsbA, PsbB, PsbC, PsbD, PsbE, PsbF, PsbH, PsbI, PsbJ, PsbK, PsbL, PsbM, PsbT, PsbX, PsbY, PsbZ, Psb30/Ycf12, peripheral proteins PsbO, CyanoQ (PsbQ), PsbU, PsbV and a large number of cofactors. It forms dimeric complexes.

It localises to the cellular thylakoid membrane. Functionally, one of the extrinsic, lumenal subunits of photosystem II (PSII). PSII is a light-driven water plastoquinone oxidoreductase, using light energy to abstract electrons from H(2)O, generating a proton gradient subsequently used for ATP formation. The extrinsic proteins stabilize the structure of photosystem II oxygen-evolving complex (OEC), the ion environment of oxygen evolution and protect the OEC against heat-induced inactivation. This Leptolyngbya laminosa (Phormidium laminosum) protein is Photosystem II extrinsic protein U.